The following is a 370-amino-acid chain: Luciferin sulfotransferase (370 aa).

90–95 (KAGTTW) serves as a coordination point for 3'-phosphoadenylyl sulfate. H165 acts as the Proton acceptor in catalysis. 3'-phosphoadenylyl sulfate contacts are provided by residues R189, S197, Y250, 284–289 (LSFESM), and 316–320 (FMRSG).

Belongs to the sulfotransferase 1 family.

It catalyses the reaction firefly D-luciferin + 3'-phosphoadenylyl sulfate = firefly D-sulfoluciferin + adenosine 3',5'-bisphosphate + H(+). The catalysed reaction is firefly L-luciferin + 3'-phosphoadenylyl sulfate = firefly L-sulfoluciferin + adenosine 3',5'-bisphosphate + H(+). Sulfoluciferin formation is inhibited by the product adenosine 3',5'-bisphosphate. Functionally, catalyzes the production of firefly sulfoluciferin from luciferin using the sulfo-donor 3'-phosphoadenylyl sulfate (PAPS). Is also able to catalyze the reverse reaction, i.e. the adenosine 3',5'-bisphosphate-dependent desulfonation of sulfoluciferin. Can use either D- or L-luciferin stereoisomer as substrate. Sulfoluciferin, which is not a substrate of P.pyralis luciferase, likely serves as a luciferin storage form in fireflies. The sequence is that of Luciferin sulfotransferase from Photinus pyralis (Common eastern firefly).